An 88-amino-acid chain; its full sequence is Hemotin (88 aa).

Residues 1–14 (MDCFKVFEVVFQSE) are Lumenal-facing. Residues 15–37 (INPLLLIPAVATIALTLCCYCYH) traverse the membrane as a helical segment. Over 38 to 88 (GYQWIRDRRTARIEEQQAQLPLPLSRISITPGCSMVATTKLTHSRNSVDIY) the chain is Cytoplasmic.

Interacts with 14-3-3zeta. In terms of tissue distribution, expressed in hemocytes.

Its subcellular location is the early endosome membrane. Its function is as follows. Negatively regulates early endosome maturation by binding to and repressing the activity of 14-3-3zeta which prevents the 14-3-3zeta-mediated activation of phosphoinositide 3-kinase Pi3K68D. This, in turn, inhibits the Pi3K68D-mediated conversion of phosphatidylinositol to phosphatidylinositol-3-phosphate and prevents progression of early endosomes through the maturation process which regulates subsequent steps of phagocytic processing. The sequence is that of Hemotin from Drosophila melanogaster (Fruit fly).